The sequence spans 188 residues: Probable manganese efflux pump MntP (188 aa).

Helical transmembrane passes span F3–G23, L41–A61, L66–I86, W106–F128, A143–G163, and I168–G188.

The protein belongs to the MntP (TC 9.B.29) family.

The protein localises to the cell inner membrane. In terms of biological role, probably functions as a manganese efflux pump. In Salmonella typhimurium (strain LT2 / SGSC1412 / ATCC 700720), this protein is Probable manganese efflux pump MntP.